Here is a 2000-residue protein sequence, read N- to C-terminus: E3 ubiquitin-protein ligase TTC3 (2000 aa).

Residues 20–249 (MDDFAEGGLS…RHSCMQCVKQ (230 aa)) form an interaction with POLG region. TPR repeat units lie at residues 250–283 (GELM…RPEN) and 284–317 (HLLY…KNTW). Position 397 is a phosphoserine (Ser397). Residues 442 to 478 (CDCHPEFLPPPSQPPRHKGKQKSRNNESEKPSSNSQV) form a disordered region. TPR repeat units lie at residues 556–592 (VLVV…YPNE) and 596–629 (CLAY…ICRL). The disordered stretch occupies residues 804 to 828 (AQERMEEDLRESNPPKPEEPEETVE). At Ser1029 the chain carries Phosphoserine. Disordered regions lie at residues 1041–1087 (NKGK…GPFA), 1233–1308 (FQPD…PEDA), 1423–1448 (QSST…SSDS), 1806–1839 (LEVK…QSQK), and 1894–1947 (EEQK…VPAP). Over residues 1059-1070 (GTASVTPSSETV) the composition is skewed to polar residues. Residue Ser1080 is modified to Phosphoserine. The segment covering 1268–1277 (DSDSSSGSAS) has biased composition (low complexity). Over residues 1829–1839 (GQATRSSQSQK) the composition is skewed to polar residues. Basic and acidic residues predominate over residues 1894–1911 (EEQKKKKPNPGKDKKTSE). Residues 1912-1934 (AHPAASVSKSSPSPPLAAAGPSA) are compositionally biased toward low complexity. An RING-type; atypical zinc finger spans residues 1952-1991 (CQICHEIFKSKNMRVLKCGHKFHKGCFKQWLKGQSTCPTC).

Interacts (when phosphorylated on Ser-397) with AKT1, AKT2 and AKT3 (when phosphorylated). Interacts with CIT. Interacts with POLG. Interacts with HSP70. Interacts with SMURF2. In terms of processing, phosphorylation on Ser-397 by Akt is required for ubiquitin ligase activity. Post-translationally, proteolytically cleaved into differently sized N- and C-terminal fragments.

It localises to the nucleus. Its subcellular location is the cytoplasm. The protein localises to the golgi apparatus. The enzyme catalyses S-ubiquitinyl-[E2 ubiquitin-conjugating enzyme]-L-cysteine + [acceptor protein]-L-lysine = [E2 ubiquitin-conjugating enzyme]-L-cysteine + N(6)-ubiquitinyl-[acceptor protein]-L-lysine.. The protein operates within protein modification; protein ubiquitination. Its function is as follows. E3 ubiquitin-protein ligase which catalyzes the formation of 'Lys-48'-polyubiquitin chains. Mediates the ubiquitination and subsequent degradation of phosphorylated Akt (AKT1, AKT2 and AKT3) in the nucleus. Acts as a terminal regulator of Akt signaling after activation; its phosphorylation by Akt, which is a prerequisite for ubiquitin ligase activity, suggests the existence of a regulation mechanism required to control Akt levels after activation. Positively regulates TGFB1-induced epithelial-mesenchymal transition and myofibroblast differentiation by mediating the ubiquitination and subsequent degradation of SMURF2. Regulates neuronal differentiation by regulating actin remodeling and Golgi organization via a signaling cascade involving RHOA, CIT and ROCK. Inhibits cell proliferation. The chain is E3 ubiquitin-protein ligase TTC3 from Rattus norvegicus (Rat).